We begin with the raw amino-acid sequence, 447 residues long: Na(+)-translocating NADH-quinone reductase subunit A (447 aa).

It belongs to the NqrA family. As to quaternary structure, composed of six subunits; NqrA, NqrB, NqrC, NqrD, NqrE and NqrF.

The catalysed reaction is a ubiquinone + n Na(+)(in) + NADH + H(+) = a ubiquinol + n Na(+)(out) + NAD(+). NQR complex catalyzes the reduction of ubiquinone-1 to ubiquinol by two successive reactions, coupled with the transport of Na(+) ions from the cytoplasm to the periplasm. NqrA to NqrE are probably involved in the second step, the conversion of ubisemiquinone to ubiquinol. The polypeptide is Na(+)-translocating NADH-quinone reductase subunit A (Haemophilus influenzae (strain PittGG)).